A 610-amino-acid polypeptide reads, in one-letter code: Serine/threonine-protein kinase RCK2 (610 aa).

Disordered stretches follow at residues 1–55 (MLKI…QDKN) and 99–127 (TSVPAIDVHESSEGQLSSDPLISDESLSE). Residues 11-24 (KKPDQADLSQESKK) show a composition bias toward basic and acidic residues. The segment covering 31-55 (RSSGTNNKDVSQITSSPKKSFQDKN) has biased composition (polar residues). Residues Ser46 and Ser50 each carry the phosphoserine modification. Positions 163-478 (YKLINKIGEG…IDQFLDDPWL (316 aa)) constitute a Protein kinase domain. ATP is bound at residue 169 to 177 (IGEGAFSKV). Residue Ser187 is modified to Phosphoserine. Lys201 serves as a coordination point for ATP. Asp313 functions as the Proton acceptor in the catalytic mechanism. Thr350 carries the phosphothreonine modification. A calmodulin-binding region spans residues 493–506 (KKAGTSERRHPHKK). Phosphoserine is present on Ser520. A disordered region spans residues 541–564 (EDRMGTRGGLGSLAEDEELEDSYS).

This sequence belongs to the protein kinase superfamily. CAMK Ser/Thr protein kinase family. CaMK subfamily. Post-translationally, autophosphorylated. Phosphorylated by HOG1 at Ser-520 after osmotic stress.

It is found in the cytoplasm. The catalysed reaction is L-seryl-[protein] + ATP = O-phospho-L-seryl-[protein] + ADP + H(+). The enzyme catalyses L-threonyl-[protein] + ATP = O-phospho-L-threonyl-[protein] + ADP + H(+). Activated by Ser-520 phosphorylation by HOG1. Serine/threonine-protein kinase involved in a signal transduction pathway that is activated by changes in the osmolarity of the extracellular environment. The sequence is that of Serine/threonine-protein kinase RCK2 (RCK2) from Saccharomyces cerevisiae (strain ATCC 204508 / S288c) (Baker's yeast).